Reading from the N-terminus, the 120-residue chain is UPF0231 protein YacL (120 aa).

It belongs to the UPF0231 family.

The sequence is that of UPF0231 protein YacL from Escherichia coli O6:K15:H31 (strain 536 / UPEC).